Reading from the N-terminus, the 233-residue chain is Sugar fermentation stimulation protein homolog (233 aa).

The protein belongs to the SfsA family.

In Acetivibrio thermocellus (strain ATCC 27405 / DSM 1237 / JCM 9322 / NBRC 103400 / NCIMB 10682 / NRRL B-4536 / VPI 7372) (Clostridium thermocellum), this protein is Sugar fermentation stimulation protein homolog.